The sequence spans 246 residues: Large ribosomal subunit protein uL4 (246 aa).

The disordered stretch occupies residues 37 to 103; the sequence is AAQANRKQDY…TEKDRSLDLN (67 aa). Residues 92 to 103 show a composition bias toward basic and acidic residues; that stretch reads PKTEKDRSLDLN.

It belongs to the universal ribosomal protein uL4 family. As to quaternary structure, part of the 50S ribosomal subunit. Interacts weakly with proteins L18e, L24 and L37e. Has been cross-linked to L18e.

In terms of biological role, one of the primary rRNA binding proteins, this protein initially binds near the 5'-end of the 23S rRNA. It is important during the early stages of 50S assembly. Its function is as follows. Makes multiple contacts with different domains of the 23S rRNA in the assembled 50S subunit. Functionally, forms part of the polypeptide exit tunnel, in which it helps forms a bend with protein L22. Contacts the macrolide antibiotic spiramycin in the polypeptide exit tunnel. The protein is Large ribosomal subunit protein uL4 (rpl4) of Haloarcula marismortui (strain ATCC 43049 / DSM 3752 / JCM 8966 / VKM B-1809) (Halobacterium marismortui).